A 474-amino-acid chain; its full sequence is PTS system sucrose-specific EIIBC component (474 aa).

Positions 4–87 (SQIAQQVIDK…SKLLGIGDMT (84 aa)) constitute a PTS EIIB type-1 domain. Cys26 functions as the Phosphocysteine intermediate; for EIIB activity in the catalytic mechanism. One can recognise a PTS EIIC type-1 domain in the interval 107 to 474 (KGLADIFVPI…LGKRAQLKAE (368 aa)). 10 helical membrane-spanning segments follow: residues 109 to 129 (LADI…LMGI), 158 to 178 (FINT…GFSA), 182 to 202 (FGGN…PALS), 229 to 249 (VGYQ…ATLE), 264 to 284 (ITPL…IGPI), 303 to 323 (LGFV…ITGM), 345 to 365 (FIFP…LGAA), 376 to 396 (IAVP…MFGV), 403 to 423 (PFIS…LFNV), and 444 to 464 (LAMY…LTVI).

The protein localises to the cell inner membrane. It carries out the reaction N(pros)-phospho-L-histidyl-[protein](out) + sucrose = sucrose 6(G)-phosphate(in) + L-histidyl-[protein]. Functionally, the phosphoenolpyruvate-dependent sugar phosphotransferase system (sugar PTS), a major carbohydrate active transport system, catalyzes the phosphorylation of incoming sugar substrates concomitantly with their translocation across the cell membrane. This system is involved in sucrose transport. This is PTS system sucrose-specific EIIBC component (scrA) from Pasteurella multocida (strain Pm70).